The sequence spans 396 residues: F-box protein pof13 (396 aa).

An F-box domain is found at 40–89 (KNSNLFLLNRDIWSLIINYLDAFDILRLMHSSRQFYYWLRKSAVDECCFN).

Part of a SCF (SKP1-cullin-F-box) protein ligase complex. Interacts with skp1.

It is found in the cytoplasm. It participates in protein modification; protein ubiquitination. The chain is F-box protein pof13 (pof13) from Schizosaccharomyces pombe (strain 972 / ATCC 24843) (Fission yeast).